The following is a 185-amino-acid chain: Ribosome-recycling factor (185 aa).

It belongs to the RRF family.

The protein resides in the cytoplasm. Responsible for the release of ribosomes from messenger RNA at the termination of protein biosynthesis. May increase the efficiency of translation by recycling ribosomes from one round of translation to another. This chain is Ribosome-recycling factor, found in Nitrosomonas eutropha (strain DSM 101675 / C91 / Nm57).